Reading from the N-terminus, the 392-residue chain is Immunoglobulin-binding protein EibA (392 aa).

Residues 1-27 form the signal peptide; it reads MSKKFTKAVLSAAMAGVLFGVSFDIMA. Residues 28–301 are surface exposed passenger domain; that stretch reads AEQSYSALNA…IAANTRTLQQ (274 aa). At 28–341 the chain is on the extracellular side; it reads AEQSYSALNA…GLFQPYSVGK (314 aa). Residues 174-215 adopt a coiled-coil conformation; sequence ESANSTIVANELEAQKGKLDAQKGELEAQKKNLGELTTRTDK. Positions 187 to 230 are right-handed coiled-coil (RHcc); it reads AQKGKLDAQKGELEAQKKNLGELTTRTDKIDAAAAATAAKVESR. The segment at 231 to 256 is saddle domain; sequence TLVGVSSDGTLTRAEGAKNTISVNDG. The tract at residues 257-322 is left-handed coiled-coil (LHcc); sequence LVALSGRTDR…INENHKEMKR (66 aa). The tract at residues 299-341 is outer membrane translocation of the passenger domain; sequence LQQHSARLDSQQRQINENHKEMKRAAAQSAALTGLFQPYSVGK. The next 4 beta stranded transmembrane spans lie at 342–352, 355–366, 369–378, and 382–392; these read FNASAAVGGYS, QALAVGVGYRFN, TAAKAGVAFS, and ASWNVGVNFEF. The translocator domain stretch occupies residues 342–392; that stretch reads FNASAAVGGYSDEQALAVGVGYRFNEQTAAKAGVAFSDGDASWNVGVNFEF.

This sequence belongs to the autotransporter-2 (AT-2) (TC 1.B.40) family. Eib subfamily. As to quaternary structure, homotrimer; can probably form mixed heterotrimers in vivo. Will form mixed heterotrimers with EibD; these are correctly located in the outer membrane and bind IgG Fc, although less well than homotrimers. Does not form trimers with distantly related YadA from Y.enterocolitica; coexpression was lethal and one of the genes is eliminated in vivo. If the full translocator domain (299-392) is exchanged with that of YadA ('368-455'), will form heterotrimers with YadA and vice-versa. In denaturing gels runs as 2 bands of about 121 and 131 kDa; extracting the sample with 88% phenol at 70 degrees Celsius reduces part of the signal to about 45 kDa. Binds the Fc portion of IgG; binds more than 1 Fc per subunit.

The protein localises to the cell surface. The protein resides in the cell outer membrane. In terms of biological role, binds (in a non-immune fashion) to the Fc portion of human IgG but not IgA; binding occurs on the cell surface. Confers the ability to survive exposure to human serum exposure. Binds to the Fc portion of human IgG and to whole mouse antibodies also via Fc, binds more than 1 Fc or IgG. This is Immunoglobulin-binding protein EibA from Escherichia coli.